Consider the following 762-residue polypeptide: Proline-rich receptor-like protein kinase PERK10 (762 aa).

Residues 1–322 form a disordered region; the sequence is MTTPAQAPRE…PTPVTDNSSS (322 aa). The Extracellular portion of the chain corresponds to 1–328; it reads MTTPAQAPRE…NSSSSGISIA (328 aa). The segment covering 13-23 has biased composition (low complexity); that stretch reads SLSPSLASPPL. The N-linked (GlcNAc...) asparagine glycan is linked to N37. The segment covering 41-57 has biased composition (low complexity); that stretch reads PTREPTNGNPPETTNTP. 3 stretches are compositionally biased toward pro residues: residues 60–210, 231–246, and 254–275; these read SSPP…PSTP, PPPP…PPSP, and HPSP…PDPL. Residues 276-305 are compositionally biased toward low complexity; the sequence is PSNSSSPPTLLPPSSVVSPPSPPRKSVSGP. Residues N278 and N319 are each glycosylated (N-linked (GlcNAc...) asparagine). The chain crosses the membrane as a helical span at residues 329 to 349; the sequence is AVVGVSIGVALVLLTLIGVVV. Topologically, residues 350–762 are cytoplasmic; sequence CCLKKRKKRL…NSYISKDENL (413 aa). The disordered stretch occupies residues 370–410; it reads TPMESSSPRSDSALLKTQSSAPLVGNRSSNRTYLSQSEPGG. Positions 372 to 407 are enriched in polar residues; sequence MESSSPRSDSALLKTQSSAPLVGNRSSNRTYLSQSE. Positions 430–706 constitute a Protein kinase domain; sequence FSDENLLGEG…SQIVRAFDSL (277 aa). ATP is bound by residues 436–444 and K458; that span reads LGEGGFGRV. D554 (proton acceptor) is an active-site residue.

It belongs to the protein kinase superfamily. Ser/Thr protein kinase family. In terms of assembly, interacts with KIPK1 and KIPK2 (via its cytosolic domain). In terms of tissue distribution, mostly expressed in inflorescence bolts and flower buds, and, to a lower extent, in roots, seedlings, leaves and siliques.

It is found in the cell membrane. The catalysed reaction is L-seryl-[protein] + ATP = O-phospho-L-seryl-[protein] + ADP + H(+). The enzyme catalyses L-threonyl-[protein] + ATP = O-phospho-L-threonyl-[protein] + ADP + H(+). In terms of biological role, could be involved in the negative regulation of root growth. The protein is Proline-rich receptor-like protein kinase PERK10 (PERK10) of Arabidopsis thaliana (Mouse-ear cress).